Reading from the N-terminus, the 118-residue chain is UPF0102 protein CMM_1377 (118 aa).

This sequence belongs to the UPF0102 family.

The polypeptide is UPF0102 protein CMM_1377 (Clavibacter michiganensis subsp. michiganensis (strain NCPPB 382)).